The primary structure comprises 513 residues: ATP synthase subunit alpha (513 aa).

169-176 (GDRQTGKT) serves as a coordination point for ATP.

It belongs to the ATPase alpha/beta chains family. As to quaternary structure, F-type ATPases have 2 components, CF(1) - the catalytic core - and CF(0) - the membrane proton channel. CF(1) has five subunits: alpha(3), beta(3), gamma(1), delta(1), epsilon(1). CF(0) has three main subunits: a(1), b(2) and c(9-12). The alpha and beta chains form an alternating ring which encloses part of the gamma chain. CF(1) is attached to CF(0) by a central stalk formed by the gamma and epsilon chains, while a peripheral stalk is formed by the delta and b chains.

The protein resides in the cell inner membrane. The catalysed reaction is ATP + H2O + 4 H(+)(in) = ADP + phosphate + 5 H(+)(out). Its function is as follows. Produces ATP from ADP in the presence of a proton gradient across the membrane. The alpha chain is a regulatory subunit. The polypeptide is ATP synthase subunit alpha (Hydrogenovibrio crunogenus (strain DSM 25203 / XCL-2) (Thiomicrospira crunogena)).